Here is a 454-residue protein sequence, read N- to C-terminus: MEIKQVFEQNSELIDQEIELIARVRSNRQGKFVSFMILNDGTTFTDLQVVYKTKTKGYEQALQARVSSIVKVIGRVVLTPEKQQKFEVQADAIELIDQAIEDYPLQKKEHTTEYLREIAHLRAKTKTFNAIFKIRSAAAYAIHKFFNDRGFVYIHSPIITSNDAEGAGEAFLVTTREDADYEKDFFAKKASLTVSGQLHAEAFAQAFKKVYTFGPTFRAENSNTAKHAAEFWMIEPEVAFADLKDNIQLIQDMVKYIINYIFKHNRRELEFCNEHLEDGLIDKLNSVRNSEFKVTTYTEAIEILKQAVANGHKFEVSDIEFGLDLGTEHERYICEQVNKAPTFVTNYPKEIKAFYMKQNEDNKTVAAVDLLVPGIGELVGGSQREDNYEKLIKRCKEVNIDIDQLEWYNNLRLYGYYKSAGFGLGFERLIMYITGASNIRDVIPFPRTPKNLLF.

This sequence belongs to the class-II aminoacyl-tRNA synthetase family. Homodimer.

Its subcellular location is the cytoplasm. The enzyme catalyses tRNA(Asn) + L-asparagine + ATP = L-asparaginyl-tRNA(Asn) + AMP + diphosphate + H(+). This chain is Asparagine--tRNA ligase, found in Mycoplasma capricolum subsp. capricolum (strain California kid / ATCC 27343 / NCTC 10154).